A 535-amino-acid polypeptide reads, in one-letter code: Methylmalonate-semialdehyde/malonate-semialdehyde dehydrogenase [acylating], mitochondrial (535 aa).

The transit peptide at 1 to 32 (MAAAVAAAAAVRSRILQVSSKVNSTWYPASSF) directs the protein to the mitochondrion. N6-acetyllysine; alternate is present on residues K47, K52, K55, and K76. 4 positions are modified to N6-succinyllysine; alternate: K47, K52, K55, and K76. An N6-acetyllysine modification is found at K87. K117 and K129 each carry N6-acetyllysine; alternate. N6-succinyllysine; alternate occurs at positions 117 and 129. Residues A183, F185, K209, E212, R213, and S262 each coordinate NAD(+). Residue S262 is modified to Phosphoserine. Position 298 is an N6-acetyllysine (K298). C317 (nucleophile) is an active-site residue. N6-acetyllysine occurs at positions 330 and 331. N6-acetyllysine; alternate is present on residues K364 and K376. 2 positions are modified to N6-succinyllysine; alternate: K364 and K376. The residue at position 380 (S380) is a Phosphoserine. Position 391 is an N6-succinyllysine (K391). E417 is an NAD(+) binding site. The residue at position 500 (K500) is an N6-acetyllysine. An N6-succinyllysine modification is found at K517.

The protein belongs to the aldehyde dehydrogenase family. In terms of assembly, homotetramer. In terms of tissue distribution, expressed in the head and flagellum of epididymal sperm but not in testicular sperm (at protein level). Kidney &gt; liver &gt; heart &gt; muscle &gt; brain.

It localises to the mitochondrion. The catalysed reaction is 3-oxopropanoate + NAD(+) + CoA + H2O = hydrogencarbonate + acetyl-CoA + NADH + H(+). The enzyme catalyses 2-methyl-3-oxopropanoate + NAD(+) + CoA + H2O = propanoyl-CoA + hydrogencarbonate + NADH + H(+). It carries out the reaction (R)-2-methyl-3-oxopropanoate + NAD(+) + CoA + H2O = propanoyl-CoA + hydrogencarbonate + NADH + H(+). It catalyses the reaction (S)-2-methyl-3-oxopropanoate + NAD(+) + CoA + H2O = propanoyl-CoA + hydrogencarbonate + NADH + H(+). Functionally, malonate and methylmalonate semialdehyde dehydrogenase involved in the catabolism of valine, thymine, and compounds catabolized by way of beta-alanine, including uracil and cytidine. The polypeptide is Methylmalonate-semialdehyde/malonate-semialdehyde dehydrogenase [acylating], mitochondrial (Rattus norvegicus (Rat)).